The following is a 350-amino-acid chain: MSNMSSTSTSVTQPAYTEAFMSAIATSVTGVNVSQYPSPSGYHVYLSSQTGIVDNTTDVSVYNVSDTYQNNNEVTSVTFIAIFKNLSSYTFSEILFYTQVNGQDFMQVAQFIPSSAIQKSSGYALVIMITLSIATPVYIIDAIQDVQQLCTNYCINVNCNAVGGNIETSYLPFSLFNLVFLYLLGVNTNTVEQSPSTQQTASEYANCINSCVQYCGTNTGLECIACLSSCRTYLLENPLFTFLLANNIQNVMELLPQGINTIYTVNVCSGKVATLTPQNFQNNLNVVSQSEIQYTIQFYLPGTNELFNALQIMISTLNTNYNYSLGVLYFTGVPLPSGETFILEVTVSES.

This is an uncharacterized protein from Sulfolobus islandicus filamentous virus (isolate Iceland/Hveragerdi) (SIFV).